The sequence spans 399 residues: Flavohemoprotein (399 aa).

The Globin domain maps to 1 to 138 (MLAEKTRSII…IADIFITVEK (138 aa)). T22 is modified (phosphothreonine). Heme b is bound at residue H85. Catalysis depends on charge relay system residues Y95 and E137. Residues 146-399 (WPGWKPFDIT…FGPKMSTVQV (254 aa)) form a reductase region. Residues 147-264 (PGWKPFDITA…SAPAGDFAIN (118 aa)) form the FAD-binding FR-type domain. Residues Y189 and 207 to 210 (RHYS) each bind FAD. 281–286 (GVGVTP) contributes to the NADP(+) binding site. 389–392 (PFGP) provides a ligand contact to FAD.

The protein belongs to the globin family. Two-domain flavohemoproteins subfamily. In the C-terminal section; belongs to the flavoprotein pyridine nucleotide cytochrome reductase family. The cofactor is FAD. Requires heme b as cofactor.

The protein localises to the cytoplasm. The catalysed reaction is 2 nitric oxide + NADPH + 2 O2 = 2 nitrate + NADP(+) + H(+). It catalyses the reaction 2 nitric oxide + NADH + 2 O2 = 2 nitrate + NAD(+) + H(+). Its function is as follows. Is involved in NO detoxification in an aerobic process, termed nitric oxide dioxygenase (NOD) reaction that utilizes O(2) and NAD(P)H to convert NO to nitrate, which protects the fungus from various noxious nitrogen compounds. Therefore, plays a central role in the inducible response to nitrosative stress. Functionally, in the presence of oxygen and NADH, it has NADH oxidase activity, which leads to the generation of superoxide and H(2)O(2). Under anaerobic conditions, it also exhibits nitric oxide reductase and FAD reductase activities. However, all these reactions are much lower than NOD activity. This chain is Flavohemoprotein (YHB1), found in Saccharomyces cerevisiae (strain ATCC 204508 / S288c) (Baker's yeast).